Here is a 201-residue protein sequence, read N- to C-terminus: MQTSPLLTQLMEALRCLPGVGPKSAQRMAFTLLQRDRSGGMRLAQALTRAMSEIGHCADCRTFTEQDVCNICSNPRRQENGQICVVESPADIYAIEQTGQFSGRYFVLMGHLSPLDGIGPDDIGLDRLEQRLASEQLSEVILATNPTVEGEATANYIAELCAQYGVEASRIAHGVPVGGELEMVDGTTLSHSLAGRHKIRF.

A C4-type zinc finger spans residues 57 to 72 (CADCRTFTEQDVCNIC). One can recognise a Toprim domain in the interval 81–176 (GQICVVESPA…EASRIAHGVP (96 aa)).

The protein belongs to the RecR family.

May play a role in DNA repair. It seems to be involved in an RecBC-independent recombinational process of DNA repair. It may act with RecF and RecO. This chain is Recombination protein RecR, found in Citrobacter koseri (strain ATCC BAA-895 / CDC 4225-83 / SGSC4696).